The following is a 137-amino-acid chain: MLQTNRLSINAIGKIKKNWIREGINQYKKRMPDLIINESKSFNIDNIRVNNIIICLTEEGQSFNSIELTSLLLNFKNKKINFLIGDADGIPSDIKDKSNLLLSLSPLTFPHELARLILIEQIYRAISISNNSPYHRA.

S-adenosyl-L-methionine-binding positions include Leu-56, Gly-85, and 104 to 109 (LSPLTF).

This sequence belongs to the RNA methyltransferase RlmH family. As to quaternary structure, homodimer.

It is found in the cytoplasm. It catalyses the reaction pseudouridine(1915) in 23S rRNA + S-adenosyl-L-methionine = N(3)-methylpseudouridine(1915) in 23S rRNA + S-adenosyl-L-homocysteine + H(+). Functionally, specifically methylates the pseudouridine at position 1915 (m3Psi1915) in 23S rRNA. This Prochlorococcus marinus subsp. pastoris (strain CCMP1986 / NIES-2087 / MED4) protein is Ribosomal RNA large subunit methyltransferase H.